A 248-amino-acid polypeptide reads, in one-letter code: PF03932 family protein CutC (248 aa).

It belongs to the CutC family. As to quaternary structure, homodimer.

The protein resides in the cytoplasm. This is PF03932 family protein CutC from Shigella dysenteriae serotype 1 (strain Sd197).